The chain runs to 441 residues: Methylenetetrahydrofolate--tRNA-(uracil-5-)-methyltransferase TrmFO (441 aa).

An FAD-binding site is contributed by 11–16 (GAGLAG).

The protein belongs to the MnmG family. TrmFO subfamily. Requires FAD as cofactor.

The protein localises to the cytoplasm. It catalyses the reaction uridine(54) in tRNA + (6R)-5,10-methylene-5,6,7,8-tetrahydrofolate + NADH + H(+) = 5-methyluridine(54) in tRNA + (6S)-5,6,7,8-tetrahydrofolate + NAD(+). It carries out the reaction uridine(54) in tRNA + (6R)-5,10-methylene-5,6,7,8-tetrahydrofolate + NADPH + H(+) = 5-methyluridine(54) in tRNA + (6S)-5,6,7,8-tetrahydrofolate + NADP(+). In terms of biological role, catalyzes the folate-dependent formation of 5-methyl-uridine at position 54 (M-5-U54) in all tRNAs. This chain is Methylenetetrahydrofolate--tRNA-(uracil-5-)-methyltransferase TrmFO, found in Lactiplantibacillus plantarum (strain ATCC BAA-793 / NCIMB 8826 / WCFS1) (Lactobacillus plantarum).